We begin with the raw amino-acid sequence, 409 residues long: Phosphatidylserine decarboxylase proenzyme, mitochondrial (409 aa).

The transit peptide at 1–52 (MAASVCRPYVRSLPGVMPWRSSSCHYEYTAMHHFLGSFQKLPFEPFNTGARK) directs the protein to the mitochondrion. The Mitochondrial matrix portion of the chain corresponds to 53–63 (IHTAPVRSLFL). A helical membrane pass occupies residues 64–82 (LRPVPILLATGGGYAGYRQ). Over 83 to 409 (YEKYRDQKLE…IRFGEALGSL (327 aa)) the chain is Mitochondrial intermembrane. Residues aspartate 191, histidine 267, and serine 378 each act as charge relay system; for autoendoproteolytic cleavage activity in the active site. Catalysis depends on serine 378, which acts as the Schiff-base intermediate with substrate; via pyruvic acid; for decarboxylase activity. At serine 378 the chain carries Pyruvic acid (Ser); by autocatalysis.

Belongs to the phosphatidylserine decarboxylase family. PSD-B subfamily. Eukaryotic type I sub-subfamily. In terms of assembly, heterodimer of a large membrane-associated beta subunit and a small pyruvoyl-containing alpha subunit. The cofactor is pyruvate. Post-translationally, is synthesized initially as an inactive proenzyme. Formation of the active enzyme involves a self-maturation process in which the active site pyruvoyl group is generated from an internal serine residue via an autocatalytic post-translational modification. Two non-identical subunits are generated from the proenzyme in this reaction, and the pyruvate is formed at the N-terminus of the alpha chain, which is derived from the carboxyl end of the proenzyme. The autoendoproteolytic cleavage occurs by a canonical serine protease mechanism, in which the side chain hydroxyl group of the serine supplies its oxygen atom to form the C-terminus of the beta chain, while the remainder of the serine residue undergoes an oxidative deamination to produce ammonia and the pyruvoyl prosthetic group on the alpha chain. During this reaction, the Ser that is part of the protease active site of the proenzyme becomes the pyruvoyl prosthetic group, which constitutes an essential element of the active site of the mature decarboxylase.

It is found in the mitochondrion inner membrane. It localises to the cytoplasm. Its subcellular location is the lipid droplet. The catalysed reaction is a 1,2-diacyl-sn-glycero-3-phospho-L-serine + H(+) = a 1,2-diacyl-sn-glycero-3-phosphoethanolamine + CO2. It functions in the pathway phospholipid metabolism; phosphatidylethanolamine biosynthesis. Catalyzes the formation of phosphatidylethanolamine (PtdEtn) from phosphatidylserine (PtdSer). Plays a central role in phospholipid metabolism and in the interorganelle trafficking of phosphatidylserine. May be involved in lipid droplet biogenesis at the endoplasmic reticulum membrane. This chain is Phosphatidylserine decarboxylase proenzyme, mitochondrial, found in Cricetulus griseus (Chinese hamster).